Consider the following 267-residue polypeptide: Myeloid leukemia factor 1 (267 aa).

Phosphoserine is present on residues serine 6, serine 8, serine 32, and serine 34. A disordered region spans residues 39 to 67 (RDLLSISDGRGRTHNRRERDDGEDSLTHA). The tract at residues 50 to 125 (RTHNRRERDD…VGDEPPKVFQ (76 aa)) is interaction with COPS3.

This sequence belongs to the MLF family. In terms of assembly, interacts with CENPU. Also interacts with NRBP1/MADM, YWHAZ/14-3-3-zeta and HNRPUL2/MANP. NRBP1 recruits a serine kinase which phosphorylates both itself and MLF1. Phosphorylated MLF1 then binds to YWHAZ and is retained in the cytoplasm. Retained in the nucleus by binding to HNRPUL2. Binds to COPS3/CSN3 which is required for suppression of COP1 and activation of p53. Phosphorylation is required for binding to YWHAZ. Highly expressed in skeletal muscle, heart, testis. Also found in lung, but not in spleen, thymus, bone marrow, liver and kidney.

The protein localises to the cytoplasm. It localises to the nucleus. The protein resides in the cell projection. It is found in the cilium. Its subcellular location is the cytoskeleton. The protein localises to the cilium basal body. Its function is as follows. Involved in lineage commitment of primary hemopoietic progenitors by restricting erythroid formation and enhancing myeloid formation. Interferes with erythropoietin-induced erythroid terminal differentiation by preventing cells from exiting the cell cycle through suppression of CDKN1B/p27Kip1 levels. Suppresses COP1 activity via CSN3 which activates p53 and induces cell cycle arrest. Binds DNA and affects the expression of a number of genes so may function as a transcription factor in the nucleus. In Mus musculus (Mouse), this protein is Myeloid leukemia factor 1 (Mlf1).